A 101-amino-acid chain; its full sequence is NAD(P)H-quinone oxidoreductase subunit 4L, chloroplastic (101 aa).

3 consecutive transmembrane segments (helical) span residues 2–22, 32–52, and 61–81; these read ILEH…YGLI, MCLE…SDFF, and IFCI…LAIV.

It belongs to the complex I subunit 4L family. In terms of assembly, NDH is composed of at least 16 different subunits, 5 of which are encoded in the nucleus.

It is found in the plastid. Its subcellular location is the chloroplast thylakoid membrane. The catalysed reaction is a plastoquinone + NADH + (n+1) H(+)(in) = a plastoquinol + NAD(+) + n H(+)(out). It catalyses the reaction a plastoquinone + NADPH + (n+1) H(+)(in) = a plastoquinol + NADP(+) + n H(+)(out). In terms of biological role, NDH shuttles electrons from NAD(P)H:plastoquinone, via FMN and iron-sulfur (Fe-S) centers, to quinones in the photosynthetic chain and possibly in a chloroplast respiratory chain. The immediate electron acceptor for the enzyme in this species is believed to be plastoquinone. Couples the redox reaction to proton translocation, and thus conserves the redox energy in a proton gradient. This is NAD(P)H-quinone oxidoreductase subunit 4L, chloroplastic from Aethionema cordifolium (Lebanon stonecress).